A 157-amino-acid polypeptide reads, in one-letter code: uncharacterized protein (157 aa).

The N-terminal stretch at 1–26 (MEALRRAHEVALRLLLCRPWASRAAA) is a signal peptide.

It localises to the secreted. This is an uncharacterized protein from Homo sapiens (Human).